We begin with the raw amino-acid sequence, 414 residues long: COUP transcription factor 2 (414 aa).

Residues 1–72 are disordered; that stretch reads MAMVVSTWRD…PGGPGSDKQQ (72 aa). A compositionally biased stretch (pro residues) spans 27 to 37; sequence PPVPGPPPGAP. The span at 38–54 shows a compositional bias: low complexity; the sequence is HTPQTPGQGGPASTPAQ. A Phosphothreonine modification is found at Thr-51. A DNA-binding region (nuclear receptor) is located at residues 76–151; that stretch reads HIECVVCGDK…VGMRREAVQR (76 aa). 2 consecutive NR C4-type zinc fingers follow at residues 79–99 and 115–139; these read CVVCGDKSSGKHYGQFTCEGC and CRANRNCPIDQHHRNQCQYCRLKKC. The tract at residues 117 to 414 is interaction with ZFPM2; it reads ANRNCPIDQH…SFNWPYMAIQ (298 aa). Residues 177–403 enclose the NR LBD domain; that stretch reads YLSGYISLLL…TLIRDMLLSG (227 aa). The interval 337–414 is important for dimerization; it reads LQEKSQCALE…SFNWPYMAIQ (78 aa).

It belongs to the nuclear hormone receptor family. NR2 subfamily. Interacts with SQSTM1. Binds DNA as a dimer; homodimer or heterodimer with NR2F6. Interacts with NCOA1, NCOA2, NCOA3 and PPARGC1A. Interacts with ZFPM2.

The protein resides in the nucleus. In terms of biological role, ligand-activated transcription factor. Activated by high concentrations of 9-cis-retinoic acid and all-trans-retinoic acid, but not by dexamethasone, cortisol or progesterone (in vitro). Regulation of the apolipoprotein A-I gene transcription. Binds to DNA site A. May be required to establish ovary identity during early gonad development. This is COUP transcription factor 2 (Nr2f2) from Rattus norvegicus (Rat).